Here is a 283-residue protein sequence, read N- to C-terminus: Thymidylate synthase (283 aa).

A dUMP-binding site is contributed by R22. C160 serves as the catalytic Nucleophile. DUMP is bound by residues 180-183, N191, and 221-223; these read RSCD and HIY. D183 is a (6R)-5,10-methylene-5,6,7,8-tetrahydrofolate binding site. S282 lines the (6R)-5,10-methylene-5,6,7,8-tetrahydrofolate pocket.

Belongs to the thymidylate synthase family. Bacterial-type ThyA subfamily. In terms of assembly, homodimer.

It localises to the cytoplasm. The enzyme catalyses dUMP + (6R)-5,10-methylene-5,6,7,8-tetrahydrofolate = 7,8-dihydrofolate + dTMP. Its pathway is pyrimidine metabolism; dTTP biosynthesis. In terms of biological role, catalyzes the reductive methylation of 2'-deoxyuridine-5'-monophosphate (dUMP) to 2'-deoxythymidine-5'-monophosphate (dTMP) while utilizing 5,10-methylenetetrahydrofolate (mTHF) as the methyl donor and reductant in the reaction, yielding dihydrofolate (DHF) as a by-product. This enzymatic reaction provides an intracellular de novo source of dTMP, an essential precursor for DNA biosynthesis. The protein is Thymidylate synthase of Aliivibrio fischeri (strain ATCC 700601 / ES114) (Vibrio fischeri).